A 129-amino-acid polypeptide reads, in one-letter code: Follitropin subunit beta (129 aa).

A signal peptide spans 1 to 20; that stretch reads MKTVQFCFLFCCWKAICCNS. 6 cysteine pairs are disulfide-bonded: cysteine 21/cysteine 69, cysteine 35/cysteine 84, cysteine 38/cysteine 122, cysteine 46/cysteine 100, cysteine 50/cysteine 102, and cysteine 105/cysteine 112. N-linked (GlcNAc...) asparagine glycosylation is found at asparagine 25 and asparagine 42.

It belongs to the glycoprotein hormones subunit beta family. In terms of assembly, heterodimer. The active follitropin is a heterodimer composed of an alpha chain/CGA shared with other hormones and a unique beta chain/FSHB shown here.

The protein localises to the secreted. In terms of biological role, together with the alpha chain CGA constitutes follitropin, the follicle-stimulating hormone, and provides its biological specificity to the hormone heterodimer. Binds FSHR, a G protein-coupled receptor, on target cells to activate downstream signaling pathways. Follitropin is involved in follicle development and spermatogenesis in reproductive organs. This Aotus nancymaae (Ma's night monkey) protein is Follitropin subunit beta (FSHB).